The following is a 282-amino-acid chain: Putative hydrolase Bamb_4846 (282 aa).

Glu124, Glu126, and Asp155 together coordinate Mg(2+).

Belongs to the FAH family. It depends on Mg(2+) as a cofactor.

The chain is Putative hydrolase Bamb_4846 from Burkholderia ambifaria (strain ATCC BAA-244 / DSM 16087 / CCUG 44356 / LMG 19182 / AMMD) (Burkholderia cepacia (strain AMMD)).